We begin with the raw amino-acid sequence, 166 residues long: Large ribosomal subunit protein bL9 (166 aa).

This sequence belongs to the bacterial ribosomal protein bL9 family.

Functionally, binds to the 23S rRNA. This is Large ribosomal subunit protein bL9 from Brachyspira hyodysenteriae (strain ATCC 49526 / WA1).